Consider the following 590-residue polypeptide: DELLA protein GAI1 (590 aa).

Positions 1 to 10 (MKREYHHPHH) are enriched in basic residues. The interval 1–28 (MKREYHHPHHPTCSTSPTGKGKMWDADP) is disordered. A DELLA motif motif is present at residues 35 to 39 (DELLA). The interval 153–182 (HIEQPPQQPPAPPLYQRDNKRLKPTTSATA) is disordered. Residues 205–575 (VDSQETGIRL…RPLIATSAWQ (371 aa)) form the GRAS domain. The tract at residues 212-266 (IRLVHTLMACAEAVQQENLKLAEALVKQIGFLAVSQAGAMRKVATYFAEGLARRI) is leucine repeat I (LRI). Residues 284-349 (QMHFYETCPY…GGPPSFRLTG (66 aa)) form a VHIID region. The VHIID signature appears at 315 to 319 (VHVID). The interval 363-395 (EVGWKLAQLAETIHVEFEYRGFVANSLADLDAS) is leucine repeat II (LRII). The tract at residues 405–496 (VAVNSVFELH…EVYLGQQICN (92 aa)) is PFYRE. The short motif at 413 to 417 (LHSLL) is the LXXLL motif element. The SAW stretch occupies residues 499-575 (ACEGPERVER…RPLIATSAWQ (77 aa)).

Belongs to the GRAS family. DELLA subfamily. Phosphorylated. Post-translationally, ubiquitinated. Upon GA application it is ubiquitinated, leading to its subsequent degradation.

It is found in the nucleus. In terms of biological role, probable transcriptional regulator that acts as a repressor of the gibberellin (GA) signaling pathway. Probably acts by participating in large multiprotein complexes that repress transcription of GA-inducible genes. Upon GA application, it is degraded by the proteasome, allowing the GA signaling pathway. The polypeptide is DELLA protein GAI1 (GAI1) (Vitis vinifera (Grape)).